A 205-amino-acid chain; its full sequence is ATP phosphoribosyltransferase (205 aa).

The protein belongs to the ATP phosphoribosyltransferase family. Short subfamily. In terms of assembly, heteromultimer composed of HisG and HisZ subunits.

The protein localises to the cytoplasm. It carries out the reaction 1-(5-phospho-beta-D-ribosyl)-ATP + diphosphate = 5-phospho-alpha-D-ribose 1-diphosphate + ATP. It functions in the pathway amino-acid biosynthesis; L-histidine biosynthesis; L-histidine from 5-phospho-alpha-D-ribose 1-diphosphate: step 1/9. Catalyzes the condensation of ATP and 5-phosphoribose 1-diphosphate to form N'-(5'-phosphoribosyl)-ATP (PR-ATP). Has a crucial role in the pathway because the rate of histidine biosynthesis seems to be controlled primarily by regulation of HisG enzymatic activity. The chain is ATP phosphoribosyltransferase from Staphylococcus saprophyticus subsp. saprophyticus (strain ATCC 15305 / DSM 20229 / NCIMB 8711 / NCTC 7292 / S-41).